The sequence spans 370 residues: Queuine tRNA-ribosyltransferase (370 aa).

D89 acts as the Proton acceptor in catalysis. Substrate contacts are provided by residues 89–93, D143, Q187, and G214; that span reads DSGGF. The RNA binding stretch occupies residues 245 to 251; that stretch reads GVGTPED. D264 acts as the Nucleophile in catalysis. Residues 269–273 form an RNA binding; important for wobble base 34 recognition region; the sequence is TRNAR. 4 residues coordinate Zn(2+): C302, C304, C307, and H333.

This sequence belongs to the queuine tRNA-ribosyltransferase family. In terms of assembly, homodimer. Within each dimer, one monomer is responsible for RNA recognition and catalysis, while the other monomer binds to the replacement base PreQ1. Zn(2+) serves as cofactor.

The enzyme catalyses 7-aminomethyl-7-carbaguanine + guanosine(34) in tRNA = 7-aminomethyl-7-carbaguanosine(34) in tRNA + guanine. It participates in tRNA modification; tRNA-queuosine biosynthesis. Its function is as follows. Catalyzes the base-exchange of a guanine (G) residue with the queuine precursor 7-aminomethyl-7-deazaguanine (PreQ1) at position 34 (anticodon wobble position) in tRNAs with GU(N) anticodons (tRNA-Asp, -Asn, -His and -Tyr). Catalysis occurs through a double-displacement mechanism. The nucleophile active site attacks the C1' of nucleotide 34 to detach the guanine base from the RNA, forming a covalent enzyme-RNA intermediate. The proton acceptor active site deprotonates the incoming PreQ1, allowing a nucleophilic attack on the C1' of the ribose to form the product. After dissociation, two additional enzymatic reactions on the tRNA convert PreQ1 to queuine (Q), resulting in the hypermodified nucleoside queuosine (7-(((4,5-cis-dihydroxy-2-cyclopenten-1-yl)amino)methyl)-7-deazaguanosine). The chain is Queuine tRNA-ribosyltransferase from Azoarcus sp. (strain BH72).